We begin with the raw amino-acid sequence, 354 residues long: Ferredoxin--NADP reductase 2 (354 aa).

Thr-14, Asp-33, Gln-41, Tyr-46, Ala-86, Phe-121, Asp-289, and Thr-330 together coordinate FAD.

Belongs to the ferredoxin--NADP reductase type 2 family. In terms of assembly, homodimer. The cofactor is FAD.

The catalysed reaction is 2 reduced [2Fe-2S]-[ferredoxin] + NADP(+) + H(+) = 2 oxidized [2Fe-2S]-[ferredoxin] + NADPH. This Christiangramia forsetii (strain DSM 17595 / CGMCC 1.15422 / KT0803) (Gramella forsetii) protein is Ferredoxin--NADP reductase 2.